A 368-amino-acid chain; its full sequence is Agmatine deiminase (368 aa).

Cys-357 acts as the Amidino-cysteine intermediate in catalysis.

It belongs to the agmatine deiminase family. As to quaternary structure, homodimer.

It catalyses the reaction agmatine + H2O = N-carbamoylputrescine + NH4(+). Its pathway is amine and polyamine biosynthesis; putrescine biosynthesis via agmatine pathway; N-carbamoylputrescine from agmatine: step 1/1. Mediates the hydrolysis of agmatine into N-carbamoylputrescine in the arginine decarboxylase (ADC) pathway of putrescine biosynthesis, a basic polyamine. The protein is Agmatine deiminase of Pseudomonas aeruginosa (strain UCBPP-PA14).